A 414-amino-acid chain; its full sequence is 2,3-diketo-5-methylthiopentyl-1-phosphate enolase (414 aa).

K99 (proton acceptor) is an active-site residue. Substrate is bound by residues K148, 174–177, H265, G338, and 360–361; these read KDDE and GG. Mg(2+)-binding residues include K174, D176, and E177. An N6-carboxylysine modification is found at K174.

Belongs to the RuBisCO large chain family. Type IV subfamily. In terms of assembly, homodimer. The cofactor is Mg(2+).

The catalysed reaction is 5-methylsulfanyl-2,3-dioxopentyl phosphate = 2-hydroxy-5-methylsulfanyl-3-oxopent-1-enyl phosphate. It functions in the pathway amino-acid biosynthesis; L-methionine biosynthesis via salvage pathway; L-methionine from S-methyl-5-thio-alpha-D-ribose 1-phosphate: step 3/6. Functionally, catalyzes the enolization of 2,3-diketo-5-methylthiopentyl-1-phosphate (DK-MTP-1-P) into 2-hydroxy-3-keto-5-methylthiopentenyl-1-phosphate (HK-MTPenyl-1-P). This Bacillus mycoides (strain KBAB4) (Bacillus weihenstephanensis) protein is 2,3-diketo-5-methylthiopentyl-1-phosphate enolase.